Consider the following 1164-residue polypeptide: FH1/FH2 domain-containing protein 1 (1164 aa).

The region spanning 53-458 (AQIPAVHRLL…AAETEKQVAL (406 aa)) is the GBD/FH3 domain. Disordered regions lie at residues 340–411 (DIEE…VGPP) and 470–500 (MPNEAGGHPDARQLWDSPETAPAARTPQSPA). The span at 355-368 (KPSSEEGKRSRRSL) shows a compositional bias: basic and acidic residues. S367 carries the post-translational modification Phosphoserine. Residues 402–411 (GPASSPVGPP) are compositionally biased toward low complexity. Residue S486 is modified to Phosphoserine. Residues 487 to 615 (PETAPAARTP…LAAPLPHSVP (129 aa)) form the FH1 domain. Position 495 is a phosphothreonine (T495). Residues S498, S523, and S573 each carry the phosphoserine modification. The interval 566-619 (GKDIPAPSPPLPLLSGVPPPPPLPPPPPIKGPFPPPPPLPLAAPLPHSVPDSSA) is disordered. Over residues 571-608 (APSPPLPLLSGVPPPPPLPPPPPIKGPFPPPPPLPLAA) the composition is skewed to pro residues. Residues 612-807 (HSVPDSSALP…AEPLFDLKVG (196 aa)) form an interaction with ROCK1 region. Positions 616-1013 (DSSALPTKRK…YRERNKTRGR (398 aa)) constitute an FH2 domain. T690 carries the post-translational modification Phosphothreonine. Residues 884–921 (LTRCAKVDFEQLTENLGQLERRSRAAEESLRSLAKHEL) adopt a coiled-coil conformation. The segment at 1020 to 1143 (KFSGVAGEAP…NRKSLRRTLK (124 aa)) is disordered. Positions 1028-1041 (APSNPSVPVAVSSG) are enriched in low complexity. A DAD domain is found at 1053 to 1133 (MKSLLTSRPE…AARERKRSRG (81 aa)). Polar residues predominate over residues 1073 to 1089 (MVQSSSPIMPTVGPSTA). Over residues 1127-1142 (ERKRSRGNRKSLRRTL) the composition is skewed to basic residues.

The protein belongs to the formin homology family. Self-associates via the FH2 domain. Binds to F-actin via its N-terminus. Binds to the cytoplasmic domain of CD21 via its C-terminus. Interacts with ROCK1 in a Src-dependent manner. Phosphorylated by ROCK1. In terms of tissue distribution, ubiquitous. Highly expressed in spleen.

It localises to the cytoplasm. The protein resides in the cytoskeleton. The protein localises to the cell projection. It is found in the bleb. Required for the assembly of F-actin structures, such as stress fibers. Depends on the Rho-ROCK cascade for its activity. Contributes to the coordination of microtubules with actin fibers and plays a role in cell elongation. Acts synergistically with ROCK1 to promote SRC-dependent non-apoptotic plasma membrane blebbing. The protein is FH1/FH2 domain-containing protein 1 (FHOD1) of Homo sapiens (Human).